Consider the following 469-residue polypeptide: 3-isopropylmalate dehydratase large subunit (469 aa).

Positions 350, 410, and 413 each coordinate [4Fe-4S] cluster.

The protein belongs to the aconitase/IPM isomerase family. LeuC type 1 subfamily. As to quaternary structure, heterodimer of LeuC and LeuD. It depends on [4Fe-4S] cluster as a cofactor.

The enzyme catalyses (2R,3S)-3-isopropylmalate = (2S)-2-isopropylmalate. Its pathway is amino-acid biosynthesis; L-leucine biosynthesis; L-leucine from 3-methyl-2-oxobutanoate: step 2/4. Functionally, catalyzes the isomerization between 2-isopropylmalate and 3-isopropylmalate, via the formation of 2-isopropylmaleate. In Brucella melitensis biotype 2 (strain ATCC 23457), this protein is 3-isopropylmalate dehydratase large subunit.